We begin with the raw amino-acid sequence, 81 residues long: D-alanyl carrier protein (81 aa).

The Carrier domain maps to 1–81; the sequence is MADEAIKNGV…KIIAKVEQAQ (81 aa). Ser39 carries the post-translational modification O-(pantetheine 4'-phosphoryl)serine.

This sequence belongs to the DltC family. Post-translationally, 4'-phosphopantetheine is transferred from CoA to a specific serine of apo-DCP.

The protein resides in the cytoplasm. It functions in the pathway cell wall biogenesis; lipoteichoic acid biosynthesis. Carrier protein involved in the D-alanylation of lipoteichoic acid (LTA). The loading of thioester-linked D-alanine onto DltC is catalyzed by D-alanine--D-alanyl carrier protein ligase DltA. The DltC-carried D-alanyl group is further transferred to cell membrane phosphatidylglycerol (PG) by forming an ester bond, probably catalyzed by DltD. D-alanylation of LTA plays an important role in modulating the properties of the cell wall in Gram-positive bacteria, influencing the net charge of the cell wall. The sequence is that of D-alanyl carrier protein from Lacticaseibacillus casei (strain BL23) (Lactobacillus casei).